A 72-amino-acid polypeptide reads, in one-letter code: PI-stichotoxin-Hmg3d (72 aa).

The signal sequence occupies residues G1–R14. The BPTI/Kunitz inhibitor domain maps to C20 to C70. Disulfide bonds link C20–C70, C29–C53, and C45–C66.

It belongs to the venom Kunitz-type family. Sea anemone type 2 potassium channel toxin subfamily.

The protein resides in the secreted. The protein localises to the nematocyst. Its function is as follows. Serine protease inhibitor that inhibits trypsin (Ki=50 nM). This protease exhibits a pronounced neuroprotective activity on Alzheimer's disease model. It enhances cell viability by 39.4% when neuroblastoma cells are in presence of the toxin component beta-amyloid, but has no effect when these cells are in presence of 6-OHDA. It induces an effective decrease of reactive oxygen species (ROS) level in the cells treated with oxidative stress inducers. It also protects these cells by inhibiting ATP-induced purinoceptor activation. Its binding affinity to P2RX7 is moderate (Kd=43.3 uM). The polypeptide is PI-stichotoxin-Hmg3d (Heteractis magnifica (Magnificent sea anemone)).